The following is a 110-amino-acid chain: MEVRAVSKFLRVSPHKARLVADLVRGKKVSDALTILKFTPKKSGRFINKTLRSAVANAENTKSMDVETLFVKSIFVDKGPQLKRWRPRAMGRATKILKGSSHITIILAEK.

Belongs to the universal ribosomal protein uL22 family. As to quaternary structure, part of the 50S ribosomal subunit.

This protein binds specifically to 23S rRNA; its binding is stimulated by other ribosomal proteins, e.g. L4, L17, and L20. It is important during the early stages of 50S assembly. It makes multiple contacts with different domains of the 23S rRNA in the assembled 50S subunit and ribosome. In terms of biological role, the globular domain of the protein is located near the polypeptide exit tunnel on the outside of the subunit, while an extended beta-hairpin is found that lines the wall of the exit tunnel in the center of the 70S ribosome. The chain is Large ribosomal subunit protein uL22 from Syntrophobacter fumaroxidans (strain DSM 10017 / MPOB).